The chain runs to 602 residues: Proteasome-associated ATPase (602 aa).

Positions 13 to 89 (PDAAEVERLR…LREEVDRLGQ (77 aa)) form a coiled coil. 289–294 (GCGKTL) lines the ATP pocket. The tract at residues 601–602 (YL) is docks into pockets in the proteasome alpha-ring.

The protein belongs to the AAA ATPase family. In terms of assembly, homohexamer. Assembles into a hexameric ring structure that caps the 20S proteasome core. Strongly interacts with the prokaryotic ubiquitin-like protein Pup through a hydrophobic interface; the interacting region of ARC lies in its N-terminal coiled-coil domain. There is one Pup binding site per ARC hexamer ring. Upon ATP-binding, the C-terminus of ARC interacts with the alpha-rings of the proteasome core, possibly by binding to the intersubunit pockets.

The protein operates within protein degradation; proteasomal Pup-dependent pathway. In terms of biological role, ATPase which is responsible for recognizing, binding, unfolding and translocation of pupylated proteins into the bacterial 20S proteasome core particle. May be essential for opening the gate of the 20S proteasome via an interaction with its C-terminus, thereby allowing substrate entry and access to the site of proteolysis. Thus, the C-termini of the proteasomal ATPase may function like a 'key in a lock' to induce gate opening and therefore regulate proteolysis. This Mycobacteroides abscessus (strain ATCC 19977 / DSM 44196 / CCUG 20993 / CIP 104536 / JCM 13569 / NCTC 13031 / TMC 1543 / L948) (Mycobacterium abscessus) protein is Proteasome-associated ATPase.